The chain runs to 978 residues: Alanine--tRNA ligase, chloroplastic/mitochondrial (978 aa).

Zn(2+) is bound by residues H655, H659, C758, and H762. A Glycyl lysine isopeptide (Lys-Gly) (interchain with G-Cter in ubiquitin) cross-link involves residue K773.

This sequence belongs to the class-II aminoacyl-tRNA synthetase family. As to quaternary structure, monomer. Zn(2+) is required as a cofactor.

The protein localises to the plastid. It is found in the chloroplast. The protein resides in the mitochondrion. It carries out the reaction tRNA(Ala) + L-alanine + ATP = L-alanyl-tRNA(Ala) + AMP + diphosphate. Its function is as follows. Catalyzes the attachment of alanine to tRNA(Ala) in a two-step reaction: alanine is first activated by ATP to form Ala-AMP and then transferred to the acceptor end of tRNA(Ala). Also edits incorrectly charged tRNA(Ala) via its editing domain. The polypeptide is Alanine--tRNA ligase, chloroplastic/mitochondrial (EMB86) (Arabidopsis thaliana (Mouse-ear cress)).